The following is a 132-amino-acid chain: Putative RNase AF_0947 (132 aa).

Residues Arg-91 and His-96 contribute to the active site. The RX(4)HXY motif motif lies at 91–98; it reads RNAIAHHY. Tyr-98 is modified (O-di-AMP-tyrosine).

Belongs to the HepT RNase toxin family. As to quaternary structure, homodimer, probably forms a complex with cognate antitoxin AF_0948. Post-translationally, modified by cognate antitoxin AF_0948; probably at least 2 successive AMPylation events occur on Tyr-98.

Probable toxic component of a putative type VII toxin-antitoxin (TA) system, probably an RNase. Probably neutralized by cognate antitoxin AF_0948. Neutralization may be due to AMPylation by AF_0948. In Archaeoglobus fulgidus (strain ATCC 49558 / DSM 4304 / JCM 9628 / NBRC 100126 / VC-16), this protein is Putative RNase AF_0947.